The chain runs to 216 residues: Transmembrane protein 163a (216 aa).

Topologically, residues 1 to 15 (MRLKPHEAQSYRKKA) are cytoplasmic. A helical transmembrane segment spans residues 16–36 (LWVSWISIVVTLILAVAGFTV). The Extracellular segment spans residues 37-43 (SFMRHSA). A helical membrane pass occupies residues 44-64 (SAFGFAFDATLDVLSSIIVLW). The Cytoplasmic segment spans residues 65–77 (RYSNAAAVHSAHR). A helical transmembrane segment spans residues 78–98 (EYIACVILGVIFILSSLCILG). Residues 99–114 (KAIHDLATKLLPEVDD) are Extracellular-facing. A helical transmembrane segment spans residues 115–135 (FLFSVSIVSGLMCVILAVAKF). Topologically, residues 136–144 (MLGRILTSR) are cytoplasmic. Residues 145–165 (ALITDGFNSMVGGIMGFSILI) traverse the membrane as a helical segment. Topologically, residues 166 to 182 (SAEVFRHYPNVWYLDGT) are extracellular. A helical transmembrane segment spans residues 183–203 (IGILIGLVIQAYGVKLLVDMI). The Cytoplasmic segment spans residues 204 to 216 (PRVRQTRNYERFE).

It belongs to the TMEM163 family.

It localises to the cytoplasmic vesicle. The protein resides in the secretory vesicle. The protein localises to the synaptic vesicle membrane. Its subcellular location is the early endosome membrane. It is found in the late endosome membrane. It localises to the lysosome membrane. The protein resides in the cell membrane. The catalysed reaction is Zn(2+)(in) = Zn(2+)(out). Its function is as follows. Zinc ion transporter that mediates zinc efflux and plays a crucial role in intracellular zinc homeostasis. Binds the divalent cations Zn(2+), Ni(2+), and to a minor extent Cu(2+). Is a functional modulator of P2X purinoceptors, including P2RX1, P2RX3, P2RX4 and P2RX7. Plays a role in central nervous system development and is required for myelination, and survival and proliferation of oligodendrocytes. This chain is Transmembrane protein 163a, found in Danio rerio (Zebrafish).